Here is a 735-residue protein sequence, read N- to C-terminus: Post-transcriptional regulator MKT1 (735 aa).

Residues 475 to 722 (QVIYNTMEET…ANERMKRAQK (248 aa)) form an interaction with PBP1 region.

Belongs to the XPG/RAD2 endonuclease family. Forms a complex composed of at least MKT1, PBP1, XAC1 and LSM12. Within the complex, interacts (via C-terminus) with PBP1; the interaction is direct. Interacts with RNA-binding protein ZC3H11 (via MKT1-binding motif); the interaction is direct. May interact with RNA-binding proteins CFB1 and CFB2. Interacts with the EIF4E6-EIF4G5 translation initiation complex via EIF4G5; the interaction with EIF4G5 is direct.

Its subcellular location is the cytoplasm. It is found in the cytosol. It localises to the stress granule. In terms of biological role, involved in post-transcriptional regulation of gene expression. Promotes mRNA stabilization by recruiting a complex containing PBP1, LSM12 and XAC1 to mRNAs. Recruited to mRNAs by sequence-specific RNA binding proteins. May regulate translation through interactions with the EIF4E6-EIF4G5 translation initiation complex. This chain is Post-transcriptional regulator MKT1, found in Trypanosoma brucei brucei (strain 927/4 GUTat10.1).